Reading from the N-terminus, the 131-residue chain is Ribosomally synthesized cyclic peptide phomopsin precursor gigA (131 aa).

The signal sequence occupies residues 1–18 (MQFTLIFFYATLAAFGLA). 5 consecutive propeptides follow at residues 19-38 (APSEQVGRDVVQEGDELDKR), 48-65 (ADLVDGDDVQEGDKLDKR), 75-92 (ADMVDGDDVQEGDKLDKR), 102-119 (ADMVDGDDVQEGDELAKR), and 129-131 (ADM).

GigA is processed by several endopeptidases including kexin proteases to produce 2 identical copies of the nonaxapeptide Ile-Asn-Phe-Lys-Ile-Pro-Tyr-Thr-Gly, one copy of the nonaketide Ile-Gly-Phe-Lys-Leu-Pro-Tyr-Arg-Gly and one copy of the nonaketide Pro-Asn-Phe-Lys-Met-Pro-Tyr-Arg-Gly, that are further modified into phomapsins B, C and A, respectively. After being excised from the precursor peptide, the core peptides are cyclized and modified post-translationally by enzymes encoded within the gene cluster. Epichloecyclin biosynthesis requires only dimethylation of the side-chain amino group of the conserved lysine for completion.

Its pathway is mycotoxin biosynthesis. In terms of biological role, ribosomally synthesized cyclic peptide phomopsin precursor; part of the gene cluster that mediates the biosynthesis of the epichloecyclins, a group of nonapeptides, with a likely cyclic structure and dimethylation of the conserved lysine. The gigA translated product contains 4 repeated peptide embedding the nonapeptide Ile-Asn-Phe-Lys-Ile-Pro-Tyr-Thr-Gly in repeats 1 and 2, Ile-Gly-Phe-Lys-Leu-Pro-Tyr-Arg-Gly in repeat 3, and Pro-Asn-Phe-Lys-Met-Pro-Tyr-Arg-Gly in repeat 4 that are converted into epichloecyclins B, C and A, respectively. Moreover, removal of the last Gly residue in epichloecyclins B and C leads to epichloecyclins D and E, respectively. The sequence is that of Ribosomally synthesized cyclic peptide phomopsin precursor gigA (nc25) from Epichloe festucae (strain Fl1).